Consider the following 835-residue polypeptide: BCL11 transcription factor A (835 aa).

Over residues 1–12 (MSRRKQGKPQHL) the composition is skewed to basic residues. Residues 1–41 (MSRRKQGKPQHLSKREFSPEPLEAILTDDEPDHGPLGAPEG) form a disordered region. The interval 1 to 210 (MSRRKQGKPQ…SEHGSPLTPR (210 aa)) is required for nuclear body formation and for SUMO1 recruitment. The C2HC-type zinc finger occupies 45–71 (LLTCGQCQMNFPLGDILIFIEHKRKQC). 4 residues coordinate Zn(2+): Cys-48, Cys-51, His-66, and Cys-71. Phosphoserine is present on Ser-86. Glycyl lysine isopeptide (Lys-Gly) (interchain with G-Cter in SUMO2) cross-links involve residues Lys-123 and Lys-164. A C2H2-type 1 zinc finger spans residues 170-193 (YTCTTCKQPFTSAWFLLQHAQNTH). A Phosphoserine modification is found at Ser-205. Arg-271 carries the asymmetric dimethylarginine modification. The tract at residues 323-376 (AGNTSSPPLSPGRPSPMQRLLQPFQPGSKPPFLATPPLPPLQSAPPPSQPPVKS) is disordered. A phosphoserine mark is found at Ser-332 and Ser-337. Residues 355–372 (LATPPLPPLQSAPPPSQP) show a composition bias toward pro residues. 2 C2H2-type zinc fingers span residues 377–399 (KSCE…RRSH) and 405–429 (YKCN…THMH). Residues 421–430 (KRHMKTHMHK) show a composition bias toward basic residues. 3 disordered regions span residues 421-458 (KRHM…LVGS), 471-512 (KSEN…ERVD), and 572-619 (RGHL…GLSK). The segment covering 441–450 (GLSTASSPEP) has biased composition (polar residues). 2 positions are modified to phosphoserine: Ser-446 and Ser-447. Residues 482–506 (NGDEEEEEDDEEEEEEEEEEEEELT) show a composition bias toward acidic residues. Residues 574 to 584 (HLAEAEGHRDT) show a composition bias toward basic and acidic residues. Residue Ser-608 is modified to Phosphoserine. A Glycyl lysine isopeptide (Lys-Gly) (interchain with G-Cter in SUMO2) cross-link involves residue Lys-620. Phosphoserine is present on residues Ser-625 and Ser-630. Residue Lys-634 forms a Glycyl lysine isopeptide (Lys-Gly) (interchain with G-Cter in SUMO1) linkage. Positions 678 to 740 (DSRQSPFASS…GRPSSKEGRR (63 aa)) are disordered. Positions 682–696 (SPFASSSEHSSENGS) are enriched in low complexity. Position 701 is a phosphothreonine (Thr-701). Residues 706–720 (LDGGISGRSGTGSGG) show a composition bias toward gly residues. Residues 737-835 (EGRRSDTCEY…RVLNNDIKTE (99 aa)) are DNA-binding. Residues 742 to 764 (DTCEYCGKVFKNCSNLTVHRRSH) form a C2H2-type 4 zinc finger. The Zn(2+) site is built by Cys-744, Cys-747, His-760, and His-764. The tract at residues 765 to 769 (TGERP) is disordered. The segment at 770-792 (YKCELCNYACAQSSKLTRHMKTH) adopts a C2H2-type 5 zinc-finger fold. Cys-772, Cys-775, His-788, and His-792 together coordinate Zn(2+). Residues 793–799 (GQVGKDV) are disordered. The segment at 800–823 (YKCEICKMPFSVYSTLEKHMKKWH) adopts a C2H2-type 6 zinc-finger fold. Positions 802, 805, 818, and 823 each coordinate Zn(2+). Lys-833 participates in a covalent cross-link: Glycyl lysine isopeptide (Lys-Gly) (interchain with G-Cter in SUMO2).

In terms of assembly, homotetrameric; self-associates via C2HC-type zinc finger domain. Interacts with MTA2, a component of the nucleosome remodeling and deacetylase (NuRD) repressor complex. Interacts (via its C2H2-type zinc finger domains 4, 5 and 6) with promoter region of gamma-globulin. Interacts with NR2F1, PIAS3, NR2F2 and NR2F6. Isoform 1, isoform 2 and isoform 3 form homodimers and heterodimers. Isoform 2 interacts with TBR1. Sumoylated with SUMO1. As to expression, expressed at high levels in brain, spleen thymus, bone marrow and testis. Expressed in CD34-positive myeloid precursor cells, B-cells, monocytes and megakaryocytes. Expression is tightly regulated during B-cell development. Expressed in fetal and adult brain, and in the plasmacytoid dendritic cell.

The protein resides in the cytoplasm. It is found in the nucleus. The protein localises to the chromosome. Its subcellular location is the nucleus matrix. Its function is as follows. Transcription factor. Associated with the BAF SWI/SNF chromatin remodeling complex. Binds to the 5'-TGACCA-3' sequence motif in regulatory regions of target genes, including a distal promoter of the HBG1 hemoglobin subunit gamma-1 gene. Involved in regulation of the developmental switch from gamma- to beta-globin, probably via direct repression of HBG1; hence indirectly repressing fetal hemoglobin (HbF) level. Involved in brain development. May play a role in hematopoiesis. Essential factor in lymphopoiesis required for B-cell formation in fetal liver. May function as a modulator of the transcriptional repression activity of NR2F2. The polypeptide is BCL11 transcription factor A (BCL11A) (Homo sapiens (Human)).